The chain runs to 444 residues: Phosphoglucosamine mutase (444 aa).

The active-site Phosphoserine intermediate is the S101. Residues S101, D240, D242, and D244 each coordinate Mg(2+). S101 bears the Phosphoserine mark.

This sequence belongs to the phosphohexose mutase family. The cofactor is Mg(2+). In terms of processing, activated by phosphorylation.

It catalyses the reaction alpha-D-glucosamine 1-phosphate = D-glucosamine 6-phosphate. Functionally, catalyzes the conversion of glucosamine-6-phosphate to glucosamine-1-phosphate. This chain is Phosphoglucosamine mutase, found in Sphingopyxis alaskensis (strain DSM 13593 / LMG 18877 / RB2256) (Sphingomonas alaskensis).